The following is a 330-amino-acid chain: Lipoyl synthase (330 aa).

Residues Cys-77, Cys-82, Cys-88, Cys-103, Cys-107, Cys-110, and Ser-317 each coordinate [4Fe-4S] cluster. Residues 89-306 form the Radical SAM core domain; the sequence is FNHGTATFMI…RSEAERMGFE (218 aa).

Belongs to the radical SAM superfamily. Lipoyl synthase family. [4Fe-4S] cluster serves as cofactor.

Its subcellular location is the cytoplasm. The catalysed reaction is [[Fe-S] cluster scaffold protein carrying a second [4Fe-4S](2+) cluster] + N(6)-octanoyl-L-lysyl-[protein] + 2 oxidized [2Fe-2S]-[ferredoxin] + 2 S-adenosyl-L-methionine + 4 H(+) = [[Fe-S] cluster scaffold protein] + N(6)-[(R)-dihydrolipoyl]-L-lysyl-[protein] + 4 Fe(3+) + 2 hydrogen sulfide + 2 5'-deoxyadenosine + 2 L-methionine + 2 reduced [2Fe-2S]-[ferredoxin]. Its pathway is protein modification; protein lipoylation via endogenous pathway; protein N(6)-(lipoyl)lysine from octanoyl-[acyl-carrier-protein]: step 2/2. In terms of biological role, catalyzes the radical-mediated insertion of two sulfur atoms into the C-6 and C-8 positions of the octanoyl moiety bound to the lipoyl domains of lipoate-dependent enzymes, thereby converting the octanoylated domains into lipoylated derivatives. The protein is Lipoyl synthase of Actinobacillus pleuropneumoniae serotype 5b (strain L20).